The sequence spans 71 residues: Prokaryotic ubiquitin-like protein Pup (71 aa).

Residues 1–18 show a composition bias toward low complexity; sequence MATRDSGGQSQTGRSQQG. The segment at 1–42 is disordered; sequence MATRDSGGQSQTGRSQQGEEIEDVTTEASPEVAERHAEITED. Residues 27-65 are ARC ATPase binding; it reads EASPEVAERHAEITEDVDDLLDEIDSVLEENAEEFVRGY. Residues 31-60 are a coiled coil; sequence EVAERHAEITEDVDDLLDEIDSVLEENAEE. Glutamate 71 participates in a covalent cross-link: Isoglutamyl lysine isopeptide (Glu-Lys) (interchain with K-? in acceptor proteins).

It belongs to the prokaryotic ubiquitin-like protein family. Strongly interacts with the proteasome-associated ATPase ARC through a hydrophobic interface; the interacting region of Pup lies in its C-terminal half. There is one Pup binding site per ARC hexamer ring.

Its pathway is protein degradation; proteasomal Pup-dependent pathway. Its function is as follows. Protein modifier that is covalently attached to lysine residues of substrate proteins, thereby targeting them for proteasomal degradation. The tagging system is termed pupylation. The polypeptide is Prokaryotic ubiquitin-like protein Pup (Salinispora arenicola (strain CNS-205)).